Consider the following 329-residue polypeptide: Sulfate/thiosulfate import ATP-binding protein CysA (329 aa).

Residues 3-237 (IEIRNVSKNF…PASDFVYHFL (235 aa)) form the ABC transporter domain. An ATP-binding site is contributed by 35–42 (GPSGCGKT).

It belongs to the ABC transporter superfamily. Sulfate/tungstate importer (TC 3.A.1.6) family. The complex is composed of two ATP-binding proteins (CysA), two transmembrane proteins (CysT and CysW) and a solute-binding protein (CysP).

It localises to the cell inner membrane. The enzyme catalyses sulfate(out) + ATP + H2O = sulfate(in) + ADP + phosphate + H(+). The catalysed reaction is thiosulfate(out) + ATP + H2O = thiosulfate(in) + ADP + phosphate + H(+). Its function is as follows. Part of the ABC transporter complex CysAWTP involved in sulfate/thiosulfate import. Responsible for energy coupling to the transport system. This chain is Sulfate/thiosulfate import ATP-binding protein CysA, found in Pseudomonas aeruginosa (strain ATCC 15692 / DSM 22644 / CIP 104116 / JCM 14847 / LMG 12228 / 1C / PRS 101 / PAO1).